Here is a 92-residue protein sequence, read N- to C-terminus: Large ribosomal subunit protein bL28 (92 aa).

Belongs to the bacterial ribosomal protein bL28 family.

In Borreliella afzelii (strain PKo) (Borrelia afzelii), this protein is Large ribosomal subunit protein bL28.